A 269-amino-acid polypeptide reads, in one-letter code: Thyroxine 5-deiodinase (269 aa).

Topologically, residues 1–14 (MLPAPHTCCRLLQQ) are cytoplasmic. Residues 15–35 (LLACCLLLPRFLLTVLLLWLL) form a helical; Signal-anchor for type II membrane protein membrane-spanning segment. The Extracellular segment spans residues 36 to 269 (DFPCVRRRVI…TGNGALVIQV (234 aa)). Sec133 is an active-site residue. Position 133 (Sec133) is a non-standard amino acid, selenocysteine.

The protein belongs to the iodothyronine deiodinase family. Monomer. Homodimer. May undergo minor heretodimerization with DIO1 and DIO2.

It is found in the cell membrane. The protein resides in the endosome membrane. The catalysed reaction is 3,3',5'-triiodo-L-thyronine + iodide + A + H(+) = L-thyroxine + AH2. It carries out the reaction 3,3'-diiodo-L-thyronine + iodide + A + H(+) = 3,3',5-triiodo-L-thyronine + AH2. The enzyme catalyses 3-iodo-L-thyronine + iodide + A + H(+) = 3,5-diiodo-L-thyronine + AH2. It catalyses the reaction L-thyronine + iodide + A + H(+) = 3-iodo-L-thyronine + AH2. The catalysed reaction is 3',5'-diiodo-L-thyronine + iodide + A + H(+) = 3,3',5'-triiodo-L-thyronine + AH2. It carries out the reaction 3'-iodo-L-thyronine + iodide + A + H(+) = 3,3'-diiodo-L-thyronine + AH2. The enzyme catalyses 3,3',5'-triiodothyronamine + iodide + A + H(+) = 3,3',5,5'-tetraiodothyronamine + AH2. It catalyses the reaction 3',5'-diiodothyronamine + iodide + A + H(+) = 3,3',5'-triiodothyronamine + AH2. The catalysed reaction is 3,3'-diiodothyronamine + iodide + A + H(+) = 3,3',5-triiodothyronamine + AH2. It carries out the reaction 3-iodothyronamine + iodide + A + H(+) = 3,5-diiodothyronamine + AH2. The enzyme catalyses 3'-iodothyronamine + iodide + A + H(+) = 3,3'-diiodothyronamine + AH2. It catalyses the reaction thyronamine + iodide + A + H(+) = 3-iodothyronamine + AH2. Plays a crucial role in the metabolism of thyroid hormones (TH) and has specific roles in TH activation and inactivation by deiodination. Catalyzes the deiodination of L-thyroxine (T4) to 3,3',5'-triiodothyronine (rT3), 3,5-diiodothyronine (3,5-T2) to 3-monoiodothyronine (3-T1), rT3 to 3',5'-diiodothyronine (3',5'-T2) and 3,3'-diiodothyronine (3,3'-T2) to 3'-monoiodothyronine (3'-T1) via inner-ring deiodination (IRD). Catalyzes the deiodination of 3,5,3'-triiodothyronine (T3) to 3,3'-diiodothyronine (3,3'-T2) via IRD. Catalyzes the deiodination of 3-T1 to L-thyronine (T0) via outer-ring deiodination (ORD). Catalyzes the tyrosyl ring deiodinations of 3,3',5,5'-tetraiodothyronamine, 3,3',5'-triiodothyronamine, 3,5,3'-triiodothyronamine, 3,5-diiodothyronamine, 3,3'-diiodothyronamine and 3-iodothyronamine. The protein is Thyroxine 5-deiodinase (dio3) of Aquarana catesbeiana (American bullfrog).